We begin with the raw amino-acid sequence, 226 residues long: 7-cyano-7-deazaguanine synthase (226 aa).

Residue 11–21 (LSGGLDSATCL) coordinates ATP. The Zn(2+) site is built by cysteine 191, cysteine 201, cysteine 204, and cysteine 207.

Belongs to the QueC family. The cofactor is Zn(2+).

It catalyses the reaction 7-carboxy-7-deazaguanine + NH4(+) + ATP = 7-cyano-7-deazaguanine + ADP + phosphate + H2O + H(+). The protein operates within purine metabolism; 7-cyano-7-deazaguanine biosynthesis. In terms of biological role, catalyzes the ATP-dependent conversion of 7-carboxy-7-deazaguanine (CDG) to 7-cyano-7-deazaguanine (preQ(0)). The protein is 7-cyano-7-deazaguanine synthase of Aromatoleum aromaticum (strain DSM 19018 / LMG 30748 / EbN1) (Azoarcus sp. (strain EbN1)).